A 294-amino-acid chain; its full sequence is Putative glucose-6-phosphate 1-epimerase (294 aa).

Residues Arg74 and Arg99 each coordinate substrate. The active site involves His164. Asp208 lines the substrate pocket. Glu267 is an active-site residue.

This sequence belongs to the glucose-6-phosphate 1-epimerase family. Monomer in solution.

The catalysed reaction is alpha-D-glucose 6-phosphate = beta-D-glucose 6-phosphate. In terms of biological role, probably functions as a hexose-6-phosphate 1-epimerase. The protein is Putative glucose-6-phosphate 1-epimerase of Salmonella typhimurium (strain LT2 / SGSC1412 / ATCC 700720).